The sequence spans 356 residues: Dihydroorotate dehydrogenase (quinone) (356 aa).

Residues 60–64 (AGFDK) and serine 84 each bind FMN. Residue lysine 64 coordinates substrate. 109-113 (NRFGF) provides a ligand contact to substrate. Residues asparagine 140 and asparagine 171 each coordinate FMN. Asparagine 171 serves as a coordination point for substrate. Serine 174 serves as the catalytic Nucleophile. Residue asparagine 176 participates in substrate binding. Lysine 216 and glycine 244 together coordinate FMN. 245-246 (NT) contributes to the substrate binding site. FMN contacts are provided by residues glycine 267, glycine 296, and 317-318 (YS).

This sequence belongs to the dihydroorotate dehydrogenase family. Type 2 subfamily. In terms of assembly, monomer. FMN is required as a cofactor.

The protein localises to the cell membrane. The enzyme catalyses (S)-dihydroorotate + a quinone = orotate + a quinol. It functions in the pathway pyrimidine metabolism; UMP biosynthesis via de novo pathway; orotate from (S)-dihydroorotate (quinone route): step 1/1. Functionally, catalyzes the conversion of dihydroorotate to orotate with quinone as electron acceptor. In Azorhizobium caulinodans (strain ATCC 43989 / DSM 5975 / JCM 20966 / LMG 6465 / NBRC 14845 / NCIMB 13405 / ORS 571), this protein is Dihydroorotate dehydrogenase (quinone).